The following is a 242-amino-acid chain: Ribonuclease 3 2 (242 aa).

In terms of domain architecture, RNase III spans L12–S137. A Mg(2+)-binding site is contributed by E51. Residue D55 is part of the active site. Mg(2+) contacts are provided by D123 and E126. E126 is a catalytic residue. Residues N165 to P235 enclose the DRBM domain.

The protein belongs to the ribonuclease III family. As to quaternary structure, homodimer. The cofactor is Mg(2+).

Its subcellular location is the cytoplasm. It carries out the reaction Endonucleolytic cleavage to 5'-phosphomonoester.. In terms of biological role, digests double-stranded RNA. Involved in the processing of primary rRNA transcript to yield the immediate precursors to the large and small rRNAs (23S and 16S). Processes some mRNAs, and tRNAs when they are encoded in the rRNA operon. Processes pre-crRNA and tracrRNA of type II CRISPR loci if present in the organism. In Nostoc sp. (strain PCC 7120 / SAG 25.82 / UTEX 2576), this protein is Ribonuclease 3 2 (rnc2).